We begin with the raw amino-acid sequence, 55 residues long: Regulatory protein MokB (55 aa).

Functionally, overlapping regulatory peptide whose translation enables hokB expression. This chain is Regulatory protein MokB (mokB), found in Escherichia coli (strain K12).